The sequence spans 218 residues: Small ribosomal subunit protein uS3 (218 aa).

The region spanning 38–106 (IRKYIESKLA…RVHINIVEIK (69 aa)) is the KH type-2 domain.

Belongs to the universal ribosomal protein uS3 family. As to quaternary structure, part of the 30S ribosomal subunit. Forms a tight complex with proteins S10 and S14.

Its function is as follows. Binds the lower part of the 30S subunit head. Binds mRNA in the 70S ribosome, positioning it for translation. The chain is Small ribosomal subunit protein uS3 from Ligilactobacillus salivarius (strain UCC118) (Lactobacillus salivarius).